Consider the following 285-residue polypeptide: 1-acyl-sn-glycerol-3-phosphate acyltransferase alpha (285 aa).

A signal peptide spans 1 to 28 (MELWPGAWTALLLLLLLLLSTLWFCSSS). Residues 29–34 (AKYFFK) are Lumenal-facing. The chain crosses the membrane as a helical span at residues 35-55 (MAFYNGWILFLAILAIPVCAV). At 56–124 (RGRNVENMKI…PDRCVPIAKR (69 aa)) the chain is on the cytoplasmic side. Positions 101 to 106 (HQSSLD) match the HXXXXD motif motif. The helical transmembrane segment at 125-145 (ELLWAGSAGLACWLAGIIFID) threads the bilayer. At 146–189 (RKRTGDAISVMSEVAQTLLTQDVRVWVFPEGTRNHNGSMLPFKR) the chain is on the lumenal side. Residues 175–178 (EGTR) carry the EGTR motif motif.

The protein belongs to the 1-acyl-sn-glycerol-3-phosphate acyltransferase family. As to expression, widely expressed.

The protein resides in the endoplasmic reticulum membrane. The catalysed reaction is a 1-acyl-sn-glycero-3-phosphate + an acyl-CoA = a 1,2-diacyl-sn-glycero-3-phosphate + CoA. It carries out the reaction 1-(9Z-octadecenoyl)-sn-glycero-3-phosphate + (9Z)-octadecenoyl-CoA = 1,2-di-(9Z-octadecenoyl)-sn-glycero-3-phosphate + CoA. The enzyme catalyses 1-(9Z-octadecenoyl)-sn-glycero-3-phosphate + hexadecanoyl-CoA = 1-(9Z)-octadecenoyl-2-hexadecanoyl-sn-glycero-3-phosphate + CoA. It catalyses the reaction heptadecanoyl-CoA + 1-(9Z-octadecenoyl)-sn-glycero-3-phosphate = 1-(9Z)-octadecenoyl-2-heptadecanoyl-sn-glycero-3-phosphate + CoA. The catalysed reaction is 1-(9Z-octadecenoyl)-sn-glycero-3-phosphate + octadecanoyl-CoA = 1-(9Z-octadecenoyl)-2-octadecanoyl-sn-glycero-3-phosphate + CoA. It carries out the reaction 1-(9Z-octadecenoyl)-sn-glycero-3-phosphate + (9Z,12Z)-octadecadienoyl-CoA = 1-(9Z)-octadecenoyl-2-(9Z,12Z)-octadecadienoyl-sn-glycero-3-phosphate + CoA. The enzyme catalyses 1-(9Z-octadecenoyl)-sn-glycero-3-phosphate + tetradecanoyl-CoA = 1-(9Z)-octadecenoyl-2-tetradecanoyl-sn-glycero-3-phosphate + CoA. It catalyses the reaction pentadecanoyl-CoA + 1-(9Z-octadecenoyl)-sn-glycero-3-phosphate = 1-(9Z)-octadecenoyl-2-pentadecanoyl-sn-glycero-3-phosphate + CoA. The catalysed reaction is 1-hexadecanoyl-sn-glycero-3-phosphate + (9Z)-octadecenoyl-CoA = 1-hexadecanoyl-2-(9Z-octadecenoyl)-sn-glycero-3-phosphate + CoA. It carries out the reaction 1-(9Z,12Z,15Z)-octadecatrienoyl-sn-glycero-3-phosphate + (9Z)-octadecenoyl-CoA = 1-(9Z,12Z,15Z)-octadecatrienoyl-2-(9Z)-octadecenoyl-sn-glycero-3-phosphate + CoA. The enzyme catalyses 1-(6Z,9Z,12Z-octadecatrienoyl)-sn-glycero-3-phosphate + (9Z)-octadecenoyl-CoA = (6Z,9Z,12Z)-octadecatrienoyl-2-(9Z)-octadecenoyl-sn-glycero-3-phosphate + CoA. It catalyses the reaction 1-eicosanoyl-sn-glycero-3-phosphate + (9Z)-octadecenoyl-CoA = 1-eicosanoyl-2-(9Z)-octadecenoyl-sn-glycero-3-phosphate + CoA. The catalysed reaction is 1-tetradecanoyl-sn-glycerol 3-phosphate + (9Z)-octadecenoyl-CoA = 1-tetradecanoyl-2-(9Z)-octadecenoyl-sn-glycero-3-phosphate + CoA. It carries out the reaction 1-(9Z-octadecenoyl)-sn-glycero-3-phosphate + (5Z,8Z,11Z,14Z)-eicosatetraenoyl-CoA = 1-(9Z)-octadecenoyl-2-(5Z,8Z,11Z,14Z)-eicosatetraenoyl-sn-glycero-3-phosphate + CoA. The enzyme catalyses 1-(9Z-octadecenoyl)-sn-glycero-3-phosphate + dodecanoyl-CoA = 1-(9Z)-octadecenoyl-2-dodecanoyl-sn-glycero-3-phosphate + CoA. It catalyses the reaction (6Z)-octadecenoyl-CoA + 1-(9Z-octadecenoyl)-sn-glycero-3-phosphate = 1-(9Z)-octadecenoyl-2-(6Z)-octadecenoyl-sn-glycero-3-phosphate + CoA. The catalysed reaction is (11Z)-octadecenoyl-CoA + 1-(9Z-octadecenoyl)-sn-glycero-3-phosphate = 1-(9Z)-octadecenoyl-2-(11Z)-octadecenoyl-sn-glycero-3-phosphate + CoA. It carries out the reaction (9Z)-hexadecenoyl-CoA + 1-(9Z-octadecenoyl)-sn-glycero-3-phosphate = 1-(9Z-octadecenoyl)-2-(9Z-hexadecenoyl)-sn-glycero-3-phosphate + CoA. It participates in phospholipid metabolism; CDP-diacylglycerol biosynthesis; CDP-diacylglycerol from sn-glycerol 3-phosphate: step 2/3. Functionally, converts 1-acyl-sn-glycerol-3-phosphate (lysophosphatidic acid or LPA) into 1,2-diacyl-sn-glycerol-3-phosphate (phosphatidic acid or PA) by incorporating an acyl moiety at the sn-2 position of the glycerol backbone. The polypeptide is 1-acyl-sn-glycerol-3-phosphate acyltransferase alpha (Agpat1) (Mus musculus (Mouse)).